The chain runs to 405 residues: Argininosuccinate synthase (405 aa).

ATP contacts are provided by residues A10–S18 and A37. Residues Y88 and S93 each contribute to the L-citrulline site. An ATP-binding site is contributed by G118. 3 residues coordinate L-aspartate: T120, N124, and D125. N124 is an L-citrulline binding site. R128, S179, S188, E264, and Y276 together coordinate L-citrulline.

It belongs to the argininosuccinate synthase family. Type 1 subfamily. Homotetramer.

The protein localises to the cytoplasm. It catalyses the reaction L-citrulline + L-aspartate + ATP = 2-(N(omega)-L-arginino)succinate + AMP + diphosphate + H(+). Its pathway is amino-acid biosynthesis; L-arginine biosynthesis; L-arginine from L-ornithine and carbamoyl phosphate: step 2/3. The polypeptide is Argininosuccinate synthase (Pseudomonas fluorescens (strain ATCC BAA-477 / NRRL B-23932 / Pf-5)).